Reading from the N-terminus, the 345-residue chain is METFVCLFKDSPQQRSDAWHAVRHTQVGGSDLASILGLNPYKSYYITLAEKANLFKKNLNRAACSWGTLFERVSKDLLELFCQTTVIGDNIHIDGTYLGYPGHSNSPDGFCYLTLGYTQQSWEIKTIFNNVCYEATKRIPVLVEIKSPYNRKIKNSVPSYYMPQIQSGLALSPPISMGIYVEAMFRVCGIHQLGWNSETNIDIHPPESMLPLAWGIITICSTQEHTEAPQDFGTLDAETFRQLLETLYQKDQYTIHYSMPYETACPEMPNVVGYFGWKVFIFQIIPVMKHPQFLKDKYPIIQQFLRDLHTIKASPSPMETYEKICCSEESPLSTEDIDNFTDMLT.

This sequence belongs to the asfivirus D345L family. As to quaternary structure, interacts with IKKA/CHUK and IKBKB.

The protein resides in the host cytoplasm. In terms of biological role, plays a role in the negative regulation of host NF-kappa-B signaling pathway. Mechanistically, recruits IKKA/CHUK and IKBKB to suppress their kinase activity towards NFKBIA. The sequence is that of Protein D345L from African swine fever virus (isolate Tick/South Africa/Pretoriuskop Pr4/1996) (ASFV).